Consider the following 385-residue polypeptide: 1-deoxy-D-xylulose 5-phosphate reductoisomerase (385 aa).

The NADPH site is built by Thr-10, Gly-11, Ile-13, Gly-36, and Asn-38. Residue Lys-123 coordinates 1-deoxy-D-xylulose 5-phosphate. An NADPH-binding site is contributed by Glu-124. A Mn(2+)-binding site is contributed by Asp-148. The 1-deoxy-D-xylulose 5-phosphate site is built by Ser-149, Glu-150, Ser-172, and His-195. Glu-150 is a binding site for Mn(2+). Gly-201 contacts NADPH. 1-deoxy-D-xylulose 5-phosphate contacts are provided by Ser-208, Asn-213, Lys-214, and Glu-217. Residue Glu-217 participates in Mn(2+) binding.

It belongs to the DXR family. The cofactor is Mg(2+). It depends on Mn(2+) as a cofactor.

The enzyme catalyses 2-C-methyl-D-erythritol 4-phosphate + NADP(+) = 1-deoxy-D-xylulose 5-phosphate + NADPH + H(+). The protein operates within isoprenoid biosynthesis; isopentenyl diphosphate biosynthesis via DXP pathway; isopentenyl diphosphate from 1-deoxy-D-xylulose 5-phosphate: step 1/6. Its function is as follows. Catalyzes the NADPH-dependent rearrangement and reduction of 1-deoxy-D-xylulose-5-phosphate (DXP) to 2-C-methyl-D-erythritol 4-phosphate (MEP). The chain is 1-deoxy-D-xylulose 5-phosphate reductoisomerase from Anaplasma phagocytophilum (strain HZ).